Reading from the N-terminus, the 247-residue chain is MQQINFYRQRVAINVLAKDIANAKAIYEAAEGHAVIGVLSAQFATVEEGVPEVKRWMAEVPSISVGLGAGDPAQYYKAAMIAAHTHPAHVNQTFTGSGFAAGALAATGGEQTHINALVSPTGTPGEVVISTGVSSSQGTPARVSCEAAVRMMQDMGAHAAKFFPMGGEKSLPELYALATTAARHGMTLIEPTGGISLDNFGIILQTCLEAGVPRVMPHVYSSIIDPQTGNTRPEDIIRLMEIVKALV.

The protein belongs to the DagF family.

It carries out the reaction 2-dehydro-3-deoxy-6-phospho-D-gluconate = D-glyceraldehyde 3-phosphate + pyruvate. Functionally, involved in the catabolism of D-glucosaminate. Catalyzes the conversion of keto-3-deoxygluconate 6-phosphate (KDGP) to yield pyruvate and glyceraldehyde-3-phosphate. The sequence is that of 2-dehydro-3-deoxy-phosphogluconate aldolase from Salmonella typhimurium (strain 14028s / SGSC 2262).